The following is a 146-amino-acid chain: Hemoglobin subunit beta-1 (146 aa).

Residues 2–146 form the Globin domain; sequence HWTAEEKHLL…VAHALARRYH (145 aa). Heme b is bound by residues His63 and His92.

The protein belongs to the globin family. In terms of assembly, there are three forms of hemoglobin in Sphenodon: A, A' and D. Hb A is a tetramer of two alpha-A and two beta-1, Hb A' is a tetramer of two alpha-a and two beta-2, Hb D is a tetramer of two alpha-D and two beta-2.

Functionally, involved in oxygen transport from the lung to the various peripheral tissues. The sequence is that of Hemoglobin subunit beta-1 (HBB1) from Sphenodon punctatus (Tuatara).